A 277-amino-acid chain; its full sequence is Adaptin ear-binding coat-associated protein 1 (277 aa).

Positions 164 to 277 (GNITAKKGGT…APQPSNWVQF (114 aa)) are disordered. Residues 187–201 (LPPPPGGKVTIPPPS) show a composition bias toward pro residues. At Thr211 the chain carries Phosphothreonine. Positions 222-234 (SNDSDILLDLDSP) are enriched in low complexity. The segment covering 235 to 245 (APVPTSAPAPA) has biased composition (pro residues). 2 short sequence motifs (WXXF motif) span residues 254–257 (WGDF) and 274–277 (WVQF). Polar residues predominate over residues 258–277 (STASSSVPNQAPQPSNWVQF).

It belongs to the NECAP family. Interacts with AP1G1 and AP2A1 components of the adapter protein complexes AP-1 and AP-2. Interacts with the GAE domain proteins GGA1, GGA2 and GGA3. Interacts with AP2A2. Expressed predominantly in brain (at protein level).

It is found in the cytoplasmic vesicle. The protein localises to the clathrin-coated vesicle membrane. Its subcellular location is the cell membrane. Involved in endocytosis. This chain is Adaptin ear-binding coat-associated protein 1 (Necap1), found in Rattus norvegicus (Rat).